The primary structure comprises 553 residues: Dihydroxy-acid dehydratase (553 aa).

Asp-78 provides a ligand contact to Mg(2+). Cys-119 contributes to the [2Fe-2S] cluster binding site. Mg(2+) is bound by residues Asp-120 and Lys-121. Residue Lys-121 is modified to N6-carboxylysine. Cys-193 is a [2Fe-2S] cluster binding site. Glu-441 serves as a coordination point for Mg(2+). Ser-467 acts as the Proton acceptor in catalysis.

It belongs to the IlvD/Edd family. As to quaternary structure, homodimer. It depends on [2Fe-2S] cluster as a cofactor. Mg(2+) is required as a cofactor.

It catalyses the reaction (2R)-2,3-dihydroxy-3-methylbutanoate = 3-methyl-2-oxobutanoate + H2O. It carries out the reaction (2R,3R)-2,3-dihydroxy-3-methylpentanoate = (S)-3-methyl-2-oxopentanoate + H2O. Its pathway is amino-acid biosynthesis; L-isoleucine biosynthesis; L-isoleucine from 2-oxobutanoate: step 3/4. It participates in amino-acid biosynthesis; L-valine biosynthesis; L-valine from pyruvate: step 3/4. In terms of biological role, functions in the biosynthesis of branched-chain amino acids. Catalyzes the dehydration of (2R,3R)-2,3-dihydroxy-3-methylpentanoate (2,3-dihydroxy-3-methylvalerate) into 2-oxo-3-methylpentanoate (2-oxo-3-methylvalerate) and of (2R)-2,3-dihydroxy-3-methylbutanoate (2,3-dihydroxyisovalerate) into 2-oxo-3-methylbutanoate (2-oxoisovalerate), the penultimate precursor to L-isoleucine and L-valine, respectively. This Pelobacter propionicus (strain DSM 2379 / NBRC 103807 / OttBd1) protein is Dihydroxy-acid dehydratase.